We begin with the raw amino-acid sequence, 305 residues long: Sulfate adenylyltransferase subunit 2 (305 aa).

This sequence belongs to the PAPS reductase family. CysD subfamily. Heterodimer composed of CysD, the smaller subunit, and CysN.

The enzyme catalyses sulfate + ATP + H(+) = adenosine 5'-phosphosulfate + diphosphate. It functions in the pathway sulfur metabolism; hydrogen sulfide biosynthesis; sulfite from sulfate: step 1/3. With CysN forms the ATP sulfurylase (ATPS) that catalyzes the adenylation of sulfate producing adenosine 5'-phosphosulfate (APS) and diphosphate, the first enzymatic step in sulfur assimilation pathway. APS synthesis involves the formation of a high-energy phosphoric-sulfuric acid anhydride bond driven by GTP hydrolysis by CysN coupled to ATP hydrolysis by CysD. This is Sulfate adenylyltransferase subunit 2 from Pseudomonas putida (strain ATCC 700007 / DSM 6899 / JCM 31910 / BCRC 17059 / LMG 24140 / F1).